The following is a 283-amino-acid chain: Secretory carrier-associated membrane protein 2 (283 aa).

The tract at residues 1-47 is disordered; that stretch reads MARHDPNPFADEEINPFANHTSVPPASNSYLKPLPPEPYDRGATVDI. Topologically, residues 1–123 are cytoplasmic; that stretch reads MARHDPNPFA…LQKIQYVAFT (123 aa). Positions 18–30 are enriched in polar residues; it reads ANHTSVPPASNSY. Residues 50 to 87 adopt a coiled-coil conformation; that stretch reads DSGNDLRAKEMELQAKENELKRKEQELKRREDAIARTG. Helical transmembrane passes span 124 to 144, 151 to 171, 186 to 206, and 234 to 254; these read TLLG…VAWI, IWLL…VLWY, FGAF…AAVA, and IMYF…IWVI. Over 255 to 283 the chain is Cytoplasmic; the sequence is QQVYAYFRGSGKAAEMKREATKSTLMRAL.

Belongs to the SCAMP family.

The protein resides in the cell membrane. Its subcellular location is the cytoplasmic vesicle. The protein localises to the secretory vesicle membrane. In terms of biological role, probably involved in membrane trafficking. The protein is Secretory carrier-associated membrane protein 2 (SCAMP2) of Arabidopsis thaliana (Mouse-ear cress).